The following is a 367-amino-acid chain: Aminomethyltransferase (367 aa).

The protein belongs to the GcvT family. In terms of assembly, the glycine cleavage system is composed of four proteins: P, T, L and H.

The catalysed reaction is N(6)-[(R)-S(8)-aminomethyldihydrolipoyl]-L-lysyl-[protein] + (6S)-5,6,7,8-tetrahydrofolate = N(6)-[(R)-dihydrolipoyl]-L-lysyl-[protein] + (6R)-5,10-methylene-5,6,7,8-tetrahydrofolate + NH4(+). The glycine cleavage system catalyzes the degradation of glycine. This Lysinibacillus sphaericus (strain C3-41) protein is Aminomethyltransferase.